Here is a 415-residue protein sequence, read N- to C-terminus: uncharacterized protein (415 aa).

Disordered regions lie at residues 39-77 (FLPP…RPIH), 220-247 (AEDK…HPLT), and 346-415 (VTLN…NGSK). Basic and acidic residues-rich tracts occupy residues 220–238 (AEDK…ESKN), 365–380 (DVNK…DKHM), and 400–415 (SKTE…NGSK).

This is an uncharacterized protein from Rattus norvegicus (Rat).